The primary structure comprises 179 residues: Bifunctional protein PyrR (179 aa).

Positions 97 to 109 (IILTDDVLYTGRT) match the PRPP-binding motif.

It belongs to the purine/pyrimidine phosphoribosyltransferase family. PyrR subfamily.

It carries out the reaction UMP + diphosphate = 5-phospho-alpha-D-ribose 1-diphosphate + uracil. In terms of biological role, regulates the transcription of the pyrimidine nucleotide (pyr) operon in response to exogenous pyrimidines. Its function is as follows. Also displays a weak uracil phosphoribosyltransferase activity which is not physiologically significant. This is Bifunctional protein PyrR from Elusimicrobium minutum (strain Pei191).